A 686-amino-acid polypeptide reads, in one-letter code: Eukaryotic translation initiation factor 3 subunit B (686 aa).

The segment at 1-29 (MAKKHAGADANDSDYNEEPNFEDPPGFVD) is disordered. Over residues 11 to 21 (NDSDYNEEPNF) the composition is skewed to acidic residues. An RRM domain is found at 53–137 (SVVVVDNIPK…HTFAVNLFTD (85 aa)). 5 WD repeats span residues 203–242 (TRER…KIQK), 289–327 (DGMS…LLDL), 330–365 (IKIP…TLME), 438–480 (EIRE…KPSL), and 526–571 (PDHF…IKRT). The stretch at 590 to 642 (AEEKQKEIKKNLKKYYAVFEQKDRLRLTRASKELLEKRAQLRETFMEYRNKRI) forms a coiled coil.

This sequence belongs to the eIF-3 subunit B family. In terms of assembly, component of the eukaryotic translation initiation factor 3 (eIF-3) complex. The eIF-3 complex interacts with pix. Interacts with mxt.

The protein localises to the cytoplasm. Functionally, RNA-binding component of the eukaryotic translation initiation factor 3 (eIF-3) complex, which is involved in protein synthesis of a specialized repertoire of mRNAs and, together with other initiation factors, stimulates binding of mRNA and methionyl-tRNAi to the 40S ribosome. The eIF-3 complex specifically targets and initiates translation of a subset of mRNAs involved in cell proliferation. The polypeptide is Eukaryotic translation initiation factor 3 subunit B (Drosophila ananassae (Fruit fly)).